The following is a 417-amino-acid chain: RH-like protein IIF (417 aa).

The next 11 membrane-spanning stretches (helical) occupy residues 12–32, 44–64, 77–97, 125–145, 172–192, 203–223, 238–258, 265–285, 287–307, 331–351, and 358–378; these read CLPLCALTLEAALILLFYFFT, LVASYQVGQDLTVMAAIGFGF, VAFNLFMLALGVQWAILLDGF, ISAGAVLGYVNLVQLVVMVLV, FYLFTAYFGVTVAWCLPKPLP, TIPSLSAMLGALFLWMFWPSF, VFNTYYALAVSVVTAISGSSL, ISMTYVHSAVLAGGVAVGTSC, LIPSPWLAMVLGLVAGLISIG, NFSLLGLLGEIIYIVLVVRHT, and MIGFQVLLSMGELSLAIAIAL.

Belongs to the ammonium transporter (TC 2.A.49) family. Rh subfamily.

It localises to the membrane. In terms of biological role, may be part of an oligomeric complex which is likely to have a transport or channel function in the erythrocyte membrane. In Pan troglodytes (Chimpanzee), this protein is RH-like protein IIF.